The following is a 427-amino-acid chain: Putative tyrosine recombinase XerC (427 aa).

The region spanning 1-81 is the Core-binding (CB) domain; sequence MTPQQLTEEY…HLRTIWGYAI (81 aa). In terms of domain architecture, Tyr recombinase spans 116–305; sequence RARSWLSMQV…DYDHMRAVLH (190 aa). Active-site residues include Arg-156, Lys-183, His-256, Arg-259, and His-283. The active-site O-(3'-phospho-DNA)-tyrosine intermediate is the Tyr-292. Disordered regions lie at residues 323–384 and 401–427; these read SGSP…PPDT and RAAT…DSLA. Positions 350 to 362 are enriched in basic and acidic residues; sequence ARTEPSEPREHTQ. A compositionally biased stretch (low complexity) spans 402 to 413; the sequence is AATASAVPAATS.

This sequence belongs to the 'phage' integrase family.

The protein resides in the cytoplasm. In terms of biological role, site-specific tyrosine recombinase, which acts by catalyzing the cutting and rejoining of the recombining DNA molecules. The sequence is that of Putative tyrosine recombinase XerC from Pseudomonas aeruginosa.